Consider the following 399-residue polypeptide: Acetate kinase (399 aa).

Mg(2+) is bound at residue N10. Residue K17 coordinates ATP. R91 contacts substrate. D148 functions as the Proton donor/acceptor in the catalytic mechanism. ATP is bound by residues 208–212 (HLGNG), 283–285 (DCR), and 331–335 (GIGEN). Residue E385 coordinates Mg(2+).

Belongs to the acetokinase family. Homodimer. Requires Mg(2+) as cofactor. Mn(2+) serves as cofactor.

The protein localises to the cytoplasm. It catalyses the reaction acetate + ATP = acetyl phosphate + ADP. Its pathway is metabolic intermediate biosynthesis; acetyl-CoA biosynthesis; acetyl-CoA from acetate: step 1/2. Its function is as follows. Catalyzes the formation of acetyl phosphate from acetate and ATP. Can also catalyze the reverse reaction. The sequence is that of Acetate kinase from Shewanella amazonensis (strain ATCC BAA-1098 / SB2B).